Consider the following 860-residue polypeptide: Leucine--tRNA ligase (860 aa).

The 'HIGH' region motif lies at 42–52 (PYPSGRLHMGH). The 'KMSKS' region signature appears at 619-623 (KMSKS). Lysine 622 is a binding site for ATP.

Belongs to the class-I aminoacyl-tRNA synthetase family.

Its subcellular location is the cytoplasm. It carries out the reaction tRNA(Leu) + L-leucine + ATP = L-leucyl-tRNA(Leu) + AMP + diphosphate. This chain is Leucine--tRNA ligase, found in Escherichia coli O45:K1 (strain S88 / ExPEC).